The following is a 269-amino-acid chain: Thiazole synthase (269 aa).

The active-site Schiff-base intermediate with DXP is K105. 1-deoxy-D-xylulose 5-phosphate is bound by residues G166, 192–193 (AG), and 214–215 (NT). The tract at residues 245–269 (AMSAQDAAQPSTPVLGTPFWHHDHG) is disordered.

It belongs to the ThiG family. In terms of assembly, homotetramer. Forms heterodimers with either ThiH or ThiS.

The protein localises to the cytoplasm. The catalysed reaction is [ThiS sulfur-carrier protein]-C-terminal-Gly-aminoethanethioate + 2-iminoacetate + 1-deoxy-D-xylulose 5-phosphate = [ThiS sulfur-carrier protein]-C-terminal Gly-Gly + 2-[(2R,5Z)-2-carboxy-4-methylthiazol-5(2H)-ylidene]ethyl phosphate + 2 H2O + H(+). Its pathway is cofactor biosynthesis; thiamine diphosphate biosynthesis. Its function is as follows. Catalyzes the rearrangement of 1-deoxy-D-xylulose 5-phosphate (DXP) to produce the thiazole phosphate moiety of thiamine. Sulfur is provided by the thiocarboxylate moiety of the carrier protein ThiS. In vitro, sulfur can be provided by H(2)S. The protein is Thiazole synthase of Paracidovorax citrulli (strain AAC00-1) (Acidovorax citrulli).